The chain runs to 86 residues: Large ribosomal subunit protein eL43 (86 aa).

Zn(2+) is bound by residues C40, C43, C58, and C61. The C4-type zinc-finger motif lies at 40 to 61; sequence CPFCRSKAVIREAYGIYRCKKC.

The protein belongs to the eukaryotic ribosomal protein eL43 family. Putative zinc-binding subfamily. Part of the 50S ribosomal subunit. It depends on Zn(2+) as a cofactor.

Binds to the 23S rRNA. This is Large ribosomal subunit protein eL43 from Nanoarchaeum equitans (strain Kin4-M).